The primary structure comprises 118 residues: Small ribosomal subunit protein uS13 (118 aa).

The disordered stretch occupies residues 92–118; sequence RRNLPVRGQNTKNNARTRKGPTRPLKR. A compositionally biased stretch (basic residues) spans 106–118; sequence ARTRKGPTRPLKR.

The protein belongs to the universal ribosomal protein uS13 family. Part of the 30S ribosomal subunit. Forms a loose heterodimer with protein S19. Forms two bridges to the 50S subunit in the 70S ribosome.

In terms of biological role, located at the top of the head of the 30S subunit, it contacts several helices of the 16S rRNA. In the 70S ribosome it contacts the 23S rRNA (bridge B1a) and protein L5 of the 50S subunit (bridge B1b), connecting the 2 subunits; these bridges are implicated in subunit movement. Contacts the tRNAs in the A and P-sites. This chain is Small ribosomal subunit protein uS13, found in Psychrobacter arcticus (strain DSM 17307 / VKM B-2377 / 273-4).